The following is a 361-amino-acid chain: [LysW]-lysine hydrolase (361 aa).

Position 67 (His-67) interacts with Zn(2+). Asp-69 is a catalytic residue. Zn(2+) is bound at residue Asp-91. The Proton acceptor role is filled by Glu-124. 3 residues coordinate Zn(2+): Glu-125, Glu-148, and His-326.

The protein belongs to the peptidase M20A family. LysK subfamily. In terms of assembly, homotetramer and homooctamer. Zn(2+) is required as a cofactor. Co(2+) serves as cofactor.

It is found in the cytoplasm. The enzyme catalyses [amino-group carrier protein]-C-terminal-gamma-(L-lysyl)-L-glutamate + H2O = [amino-group carrier protein]-C-terminal-L-glutamate + L-lysine. The protein operates within amino-acid biosynthesis; L-lysine biosynthesis via AAA pathway; L-lysine from L-alpha-aminoadipate (Thermus route): step 5/5. Catalyzes the release of L-lysine from [LysW]-gamma-L-lysine. In vitro, can deacetylate both N(2)-acetyl-L-lysine and N(2)-acetyl-L-ornithine. The protein is [LysW]-lysine hydrolase of Thermus thermophilus (strain ATCC BAA-163 / DSM 7039 / HB27).